We begin with the raw amino-acid sequence, 428 residues long: Dihydroorotase (428 aa).

The Zn(2+) site is built by histidine 59 and histidine 61. Residues 61–63 (HLR) and asparagine 93 each bind substrate. Positions 151, 178, and 231 each coordinate Zn(2+). Asparagine 277 provides a ligand contact to substrate. Aspartate 304 contributes to the Zn(2+) binding site. The active site involves aspartate 304. Substrate is bound by residues histidine 308 and 322-323 (FG).

It belongs to the metallo-dependent hydrolases superfamily. DHOase family. Class I DHOase subfamily. The cofactor is Zn(2+).

The enzyme catalyses (S)-dihydroorotate + H2O = N-carbamoyl-L-aspartate + H(+). It participates in pyrimidine metabolism; UMP biosynthesis via de novo pathway; (S)-dihydroorotate from bicarbonate: step 3/3. Catalyzes the reversible cyclization of carbamoyl aspartate to dihydroorotate. This Bacillus cereus (strain G9842) protein is Dihydroorotase.